The following is a 248-amino-acid chain: 3-deoxy-manno-octulosonate cytidylyltransferase (248 aa).

It belongs to the KdsB family.

The protein localises to the cytoplasm. The enzyme catalyses 3-deoxy-alpha-D-manno-oct-2-ulosonate + CTP = CMP-3-deoxy-beta-D-manno-octulosonate + diphosphate. Its pathway is nucleotide-sugar biosynthesis; CMP-3-deoxy-D-manno-octulosonate biosynthesis; CMP-3-deoxy-D-manno-octulosonate from 3-deoxy-D-manno-octulosonate and CTP: step 1/1. It participates in bacterial outer membrane biogenesis; lipopolysaccharide biosynthesis. Its function is as follows. Activates KDO (a required 8-carbon sugar) for incorporation into bacterial lipopolysaccharide in Gram-negative bacteria. In Syntrophus aciditrophicus (strain SB), this protein is 3-deoxy-manno-octulosonate cytidylyltransferase.